We begin with the raw amino-acid sequence, 95 residues long: Aspartyl/glutamyl-tRNA(Asn/Gln) amidotransferase subunit C (95 aa).

The protein belongs to the GatC family. In terms of assembly, heterotrimer of A, B and C subunits.

The enzyme catalyses L-glutamyl-tRNA(Gln) + L-glutamine + ATP + H2O = L-glutaminyl-tRNA(Gln) + L-glutamate + ADP + phosphate + H(+). It catalyses the reaction L-aspartyl-tRNA(Asn) + L-glutamine + ATP + H2O = L-asparaginyl-tRNA(Asn) + L-glutamate + ADP + phosphate + 2 H(+). Allows the formation of correctly charged Asn-tRNA(Asn) or Gln-tRNA(Gln) through the transamidation of misacylated Asp-tRNA(Asn) or Glu-tRNA(Gln) in organisms which lack either or both of asparaginyl-tRNA or glutaminyl-tRNA synthetases. The reaction takes place in the presence of glutamine and ATP through an activated phospho-Asp-tRNA(Asn) or phospho-Glu-tRNA(Gln). The chain is Aspartyl/glutamyl-tRNA(Asn/Gln) amidotransferase subunit C from Pseudomonas entomophila (strain L48).